A 403-amino-acid chain; its full sequence is G2/mitotic-specific cyclin-B3 (403 aa).

Disordered stretches follow at residues 1–86 and 102–122; these read MPVA…APPA and RKTP…PEEP. Residues 7 to 25 are compositionally biased toward polar residues; the sequence is SKAQSSKQPRASKAPSVTE. Residues 51-59 carry the D-box motif; it reads RSAFGDITN.

It belongs to the cyclin family. Cyclin AB subfamily. Interacts with the CDK1 and CDK2 protein kinases. In terms of processing, ubiquitinated, leading to its degradation.

The protein resides in the nucleus. Functionally, cyclins are positive regulatory subunits of the cyclin-dependent kinases (CDKs), and thereby play an essential role in the control of the cell cycle, notably via their destruction during cell division. Could be involved at the G2/M (mitosis or meiosis) transition. G2/M cyclins accumulate steadily during G2 and are abruptly destroyed at mitosis. In Gallus gallus (Chicken), this protein is G2/mitotic-specific cyclin-B3 (CCNB3).